The sequence spans 634 residues: RNA polymerase sigma factor RpoD (634 aa).

A disordered region spans residues 177 to 202; sequence LHDETPENDEENSSETEGEEHEDNHL. A compositionally biased stretch (acidic residues) spans 182 to 197; sequence PENDEENSSETEGEEH. Residues 385–455 are sigma-70 factor domain-2; it reads MIEANLRLVI…TRAIADQART (71 aa). An Interaction with polymerase core subunit RpoC motif is present at residues 409-412; sequence DLIQ. Residues 464–541 are sigma-70 factor domain-3; sequence ETINKILRTS…DKNAVAPIDA (78 aa). The sigma-70 factor domain-4 stretch occupies residues 554–607; it reads VLATLTPREERVLRMRFGIGMNTDHTLEEVGQQFKVTRERIRQIESKALRKLQH. Residues 580-599 constitute a DNA-binding region (H-T-H motif); sequence LEEVGQQFKVTRERIRQIES. Residues 608–634 are disordered; the sequence is PIRSKKLNSFRSGGKRGDGNSSDLLEA.

The protein belongs to the sigma-70 factor family. RpoD/SigA subfamily. In terms of assembly, interacts transiently with the RNA polymerase catalytic core.

It localises to the cytoplasm. Functionally, sigma factors are initiation factors that promote the attachment of RNA polymerase to specific initiation sites and are then released. This sigma factor is the primary sigma factor during exponential growth. This Rickettsia conorii (strain ATCC VR-613 / Malish 7) protein is RNA polymerase sigma factor RpoD.